Here is a 798-residue protein sequence, read N- to C-terminus: Protocadherin beta-2 (798 aa).

Positions 1–30 (MEAGEGKERVPKQRQVLIFFVLLGIAQASC) are cleaved as a signal peptide. Residues 31 to 692 (QPRHYSVAEE…AQADLLTVYL (662 aa)) are Extracellular-facing. 5 Cadherin domains span residues 37–135 (VAEE…SPVF), 136–244 (LDKE…VPEF), 249–349 (YEVQ…PPEL), 354–453 (LINQ…APAF), and 458–563 (YTLF…SPFV). N-linked (GlcNAc...) asparagine glycosylation occurs at Asn171. Lys299 is subject to N6-acetyllysine. N-linked (GlcNAc...) asparagine glycans are attached at residues Asn420 and Asn438. Residue Asn569 is glycosylated (N-linked (GlcNAc...) asparagine). The Cadherin 6 domain maps to 570–673 (GSAPCTELVP…LVDGFSQPYL (104 aa)). A helical membrane pass occupies residues 693–713 (VVALASVSSLFLFSVLLFVAV). Residues 714-798 (RLCRRSRAAS…PSFRKSFEFT (85 aa)) are Cytoplasmic-facing.

It localises to the cell membrane. Its function is as follows. Potential calcium-dependent cell-adhesion protein. May be involved in the establishment and maintenance of specific neuronal connections in the brain. The protein is Protocadherin beta-2 (PCDHB2) of Homo sapiens (Human).